The chain runs to 123 residues: Ribosome-binding factor A (123 aa).

Belongs to the RbfA family. As to quaternary structure, monomer. Binds 30S ribosomal subunits, but not 50S ribosomal subunits or 70S ribosomes.

It is found in the cytoplasm. Functionally, one of several proteins that assist in the late maturation steps of the functional core of the 30S ribosomal subunit. Associates with free 30S ribosomal subunits (but not with 30S subunits that are part of 70S ribosomes or polysomes). Required for efficient processing of 16S rRNA. May interact with the 5'-terminal helix region of 16S rRNA. This is Ribosome-binding factor A from Delftia acidovorans (strain DSM 14801 / SPH-1).